The primary structure comprises 966 residues: Calsyntenin-2 (966 aa).

Positions 1–20 are cleaved as a signal peptide; that stretch reads MLPGRLCLVPLLLALGVGSG. The Extracellular portion of the chain corresponds to 21–835; it reads GGSGDGGDSR…SIQRSSVVPS (815 aa). 2 consecutive Cadherin domains span residues 46 to 162 and 163 to 282; these read IETS…APTF and KEPA…MPLF. N-linked (GlcNAc...) asparagine glycosylation is found at N58 and N100. N-linked (GlcNAc...) asparagine glycosylation is found at N344, N376, N720, and N733. Residues 836-856 traverse the membrane as a helical segment; it reads IATVVIIISVCMLVFVVAMGV. Topologically, residues 857-966 are cytoplasmic; it reads YRVRIAHQHF…NTAGVINIWK (110 aa). The interval 890–966 is disordered; the sequence is NPMEKHEGPG…NTAGVINIWK (77 aa). The span at 901–916 shows a compositional bias: acidic residues; that stretch reads GEDETTEVEEEEEAEE. A compositionally biased stretch (polar residues) spans 943-960; it reads QSGTSSQSPERSTWNTAG.

This sequence belongs to the calsyntenin family. Proteolytically processed under normal cellular conditions. A primary zeta-cleavage generates a large extracellular (soluble) N-terminal domain (sAlc) and a short C-terminal transmembrane fragment (CTF1). A secondary cleavage catalyzed by gamma-secretase within the transmembrane domain releases the beta-Alc-gamma chain in the extracellular milieu and produces an intracellular fragment (AlcICD). This processing is strongly suppressed in the tripartite complex formed with APBA2 and APP, which seems to prevent the association with PSEN1. Restricted to the brain. In the cerebral cortex, found in the somas and neuropil of all layers. Expressed at highest levels in neurons of cortical layers 5 and 6 and, at lower levels, in neurons of the upper layers. Highly expressed in Purkinje cells. Also found in a few scattered interneurons throughout the granule cell layer and occasionally in neurons in the molecular layer (at protein level). Present throughout all cortical layers, highest levels in GABAergic neurons (based on morphology and distribution pattern).

The protein localises to the postsynaptic cell membrane. It localises to the endoplasmic reticulum membrane. Its subcellular location is the golgi apparatus membrane. The protein resides in the cell projection. It is found in the dendrite. Postsynaptic adhesion molecule that binds to presynaptic neurexins to mediate synapse formation, and which is involved in learning and memory. Promotes synapse development by acting as a cell adhesion molecule at the postsynaptic membrane, which associates with neurexin-alpha at the presynaptic membrane. The polypeptide is Calsyntenin-2 (Mus musculus (Mouse)).